The sequence spans 185 residues: Ribose 1,5-bisphosphate phosphokinase PhnN (185 aa).

Position 10–17 (10–17 (GPSGSGKD)) interacts with ATP.

This sequence belongs to the ribose 1,5-bisphosphokinase family.

The enzyme catalyses alpha-D-ribose 1,5-bisphosphate + ATP = 5-phospho-alpha-D-ribose 1-diphosphate + ADP. Its pathway is metabolic intermediate biosynthesis; 5-phospho-alpha-D-ribose 1-diphosphate biosynthesis; 5-phospho-alpha-D-ribose 1-diphosphate from D-ribose 5-phosphate (route II): step 3/3. Functionally, catalyzes the phosphorylation of ribose 1,5-bisphosphate to 5-phospho-D-ribosyl alpha-1-diphosphate (PRPP). This chain is Ribose 1,5-bisphosphate phosphokinase PhnN, found in Pseudomonas paraeruginosa (strain DSM 24068 / PA7) (Pseudomonas aeruginosa (strain PA7)).